An 80-amino-acid polypeptide reads, in one-letter code: HssA/B-like protein 2 (80 aa).

Residues 1–29 (MSLLSALTSISKPMNTSSKSSVSSKNVSG) are disordered. A compositionally biased stretch (low complexity) spans 9-29 (SISKPMNTSSKSSVSSKNVSG).

Belongs to the hssA/B family.

In Dictyostelium discoideum (Social amoeba), this protein is HssA/B-like protein 2 (hssl2).